Here is a 324-residue protein sequence, read N- to C-terminus: Zinc metalloproteinase leucurolysin-B (324 aa).

Residues 1–119 (DTVLLNRISH…LNPQCILNEP (119 aa)) form the Peptidase M12B domain. Asp11 provides a ligand contact to Ca(2+). Intrachain disulfides connect Cys34–Cys114, Cys74–Cys98, and Cys76–Cys81. Residue His59 coordinates Zn(2+). Glu60 is an active-site residue. 2 residues coordinate Zn(2+): His63 and His69. An N-linked (GlcNAc...) asparagine glycan is attached at Asn97. Ca(2+)-binding residues include Cys114, Asn117, Val129, Asn132, Leu134, Glu136, Glu139, and Asp142. In terms of domain architecture, Disintegrin spans 127–213 (PPVCGNELLE…QCPTDDFKRN (87 aa)). Intrachain disulfides connect Cys130/Cys159, Cys141/Cys154, Cys143/Cys149, Cys153/Cys176, Cys167/Cys173, Cys172/Cys198, Cys185/Cys205, Cys192/Cys224, Cys217/Cys229, Cys236/Cys286, Cys251/Cys295, Cys264/Cys274, and Cys281/Cys315. Residues 191–193 (ECD) carry the D/ECD-tripeptide motif. Residues Asn296 and Asn305 are each glycosylated (N-linked (GlcNAc...) asparagine).

It belongs to the venom metalloproteinase (M12B) family. P-III subfamily. P-IIIa sub-subfamily. Monomer. Zn(2+) serves as cofactor. In terms of processing, N-glycosylated. Post-translationally, the N-terminus is blocked. As to expression, expressed by the venom gland.

It is found in the secreted. With respect to regulation, inhibited by EDTA, but not by PMSF. Pre-incubation with 2 mM DTT completely abolishes activity. In terms of biological role, snake venom zinc metalloproteinase that acts as a potent hemorrhagic toxin. Hydrolyzes the insulin B chain at the 14-Ala-|-Leu-15 bond but not the 16-Tyr-|-Leu-17 bond. Degrades the alpha-chain of fibrin and hydrolyzes the Aalpha-chain of fibrinogen (FGA) while leaving the beta and gamma chains unaffected. Degrades type-I collagen and its gelatin. Degrades the alpha-1 chain of type-IV collagen and its gelatin but not the alpha-2 chain. Degrades plasma fibronectin, plasma vitronectin and basement membrane enactin. It inhibits collagen-induced platelet aggregation. The protein is Zinc metalloproteinase leucurolysin-B of Bothrops leucurus (Whitetail lancehead).